We begin with the raw amino-acid sequence, 723 residues long: Fatty acid oxidation complex subunit alpha (723 aa).

Residues 1–189 are enoyl-CoA hydratase/isomerase; that stretch reads MIYQAKTLQV…KVGLLDAIVD (189 aa). Residue D296 coordinates substrate. Positions 311-723 are 3-hydroxyacyl-CoA dehydrogenase; that stretch reads SQDTQHAAVL…FYSAQQVSAL (413 aa). NAD(+) contacts are provided by residues M325, D344, 401–403, K408, and S430; that span reads VVE. Catalysis depends on H451, which acts as the For 3-hydroxyacyl-CoA dehydrogenase activity. An NAD(+)-binding site is contributed by N454. Substrate contacts are provided by N501 and Y661.

The protein in the N-terminal section; belongs to the enoyl-CoA hydratase/isomerase family. It in the C-terminal section; belongs to the 3-hydroxyacyl-CoA dehydrogenase family. As to quaternary structure, heterotetramer of two alpha chains (FadB) and two beta chains (FadA).

It catalyses the reaction a (3S)-3-hydroxyacyl-CoA + NAD(+) = a 3-oxoacyl-CoA + NADH + H(+). It carries out the reaction a (3S)-3-hydroxyacyl-CoA = a (2E)-enoyl-CoA + H2O. The catalysed reaction is a 4-saturated-(3S)-3-hydroxyacyl-CoA = a (3E)-enoyl-CoA + H2O. The enzyme catalyses (3S)-3-hydroxybutanoyl-CoA = (3R)-3-hydroxybutanoyl-CoA. It catalyses the reaction a (3Z)-enoyl-CoA = a 4-saturated (2E)-enoyl-CoA. It carries out the reaction a (3E)-enoyl-CoA = a 4-saturated (2E)-enoyl-CoA. The protein operates within lipid metabolism; fatty acid beta-oxidation. Its function is as follows. Involved in the aerobic and anaerobic degradation of long-chain fatty acids via beta-oxidation cycle. Catalyzes the formation of 3-oxoacyl-CoA from enoyl-CoA via L-3-hydroxyacyl-CoA. It can also use D-3-hydroxyacyl-CoA and cis-3-enoyl-CoA as substrate. The protein is Fatty acid oxidation complex subunit alpha of Vibrio cholerae serotype O1 (strain ATCC 39315 / El Tor Inaba N16961).